The following is a 977-amino-acid chain: Alanine--tRNA ligase (977 aa).

Residues 512–535 (SQVDSKLQSSTPAGTGSYDSKQVS) are disordered. Zn(2+)-binding residues include H618, H622, C720, and H724.

The protein belongs to the class-II aminoacyl-tRNA synthetase family. Zn(2+) serves as cofactor.

The protein resides in the cytoplasm. It carries out the reaction tRNA(Ala) + L-alanine + ATP = L-alanyl-tRNA(Ala) + AMP + diphosphate. Catalyzes the attachment of alanine to tRNA(Ala) in a two-step reaction: alanine is first activated by ATP to form Ala-AMP and then transferred to the acceptor end of tRNA(Ala). Also edits incorrectly charged Ser-tRNA(Ala) and Gly-tRNA(Ala) via its editing domain. In Leptospira interrogans serogroup Icterohaemorrhagiae serovar copenhageni (strain Fiocruz L1-130), this protein is Alanine--tRNA ligase.